A 435-amino-acid chain; its full sequence is Legumain (435 aa).

The N-terminal stretch at M1–A17 is a signal peptide. N93 carries an N-linked (GlcNAc...) asparagine glycan. H150 is a catalytic residue. A glycan (N-linked (GlcNAc...) asparagine) is linked at N169. The active-site Nucleophile is C191. N265 and N274 each carry an N-linked (GlcNAc...) asparagine glycan. Positions D326–Y435 are excised as a propeptide. Cystine bridges form between C380–C414 and C392–C431.

This sequence belongs to the peptidase C13 family. In terms of assembly, homodimer before autocatalytic removal of the propeptide. Monomer after autocatalytic processing. May interact with integrins. Post-translationally, glycosylated. In terms of processing, activated by autocatalytic processing at pH 4. In terms of tissue distribution, detected in kidney proximal tubules (at protein level). Ubiquitous. Particularly abundant in kidney and placenta.

Its subcellular location is the lysosome. The catalysed reaction is Hydrolysis of proteins and small molecule substrates at -Asn-|-Xaa- bonds.. Its activity is regulated as follows. Inhibited by cystatin-C. In terms of biological role, has a strict specificity for hydrolysis of asparaginyl bonds. Can also cleave aspartyl bonds slowly, especially under acidic conditions. Involved in the processing of proteins for MHC class II antigen presentation in the lysosomal/endosomal system. Also involved in MHC class I antigen presentation in cross-presenting dendritic cells by mediating cleavage and maturation of Perforin-2 (MPEG1), thereby promoting antigen translocation in the cytosol. Required for normal lysosomal protein degradation in renal proximal tubules. Required for normal degradation of internalized EGFR. Plays a role in the regulation of cell proliferation via its role in EGFR degradation. The sequence is that of Legumain (Lgmn) from Mus musculus (Mouse).